A 221-amino-acid chain; its full sequence is Deoxyribose-phosphate aldolase (221 aa).

Asp89 acts as the Proton donor/acceptor in catalysis. Residue Lys151 is the Schiff-base intermediate with acetaldehyde of the active site. Lys180 functions as the Proton donor/acceptor in the catalytic mechanism.

It belongs to the DeoC/FbaB aldolase family. DeoC type 1 subfamily.

It is found in the cytoplasm. The enzyme catalyses 2-deoxy-D-ribose 5-phosphate = D-glyceraldehyde 3-phosphate + acetaldehyde. The protein operates within carbohydrate degradation; 2-deoxy-D-ribose 1-phosphate degradation; D-glyceraldehyde 3-phosphate and acetaldehyde from 2-deoxy-alpha-D-ribose 1-phosphate: step 2/2. In terms of biological role, catalyzes a reversible aldol reaction between acetaldehyde and D-glyceraldehyde 3-phosphate to generate 2-deoxy-D-ribose 5-phosphate. This chain is Deoxyribose-phosphate aldolase, found in Mesomycoplasma hyopneumoniae (strain J / ATCC 25934 / NCTC 10110) (Mycoplasma hyopneumoniae).